The sequence spans 88 residues: Large ribosomal subunit protein bL27 (88 aa).

The tract at residues 1-21 (MAHKKGVGSSRNGRDSQPKML) is disordered.

It belongs to the bacterial ribosomal protein bL27 family.

The polypeptide is Large ribosomal subunit protein bL27 (Pelotomaculum thermopropionicum (strain DSM 13744 / JCM 10971 / SI)).